The following is a 238-amino-acid chain: Fmr1 neighbor protein (238 aa).

The disordered stretch occupies residues 1-30; the sequence is MPSDRRPSQRRNRSKSRDYRGARSKVTRAD. The Cytoplasmic segment spans residues 1 to 79; it reads MPSDRRPSQR…CLQYLWARRH (79 aa). Over residues 15–30 the composition is skewed to basic and acidic residues; that stretch reads KSRDYRGARSKVTRAD. A helical membrane pass occupies residues 80–100; sequence LGLLLLLFWTLVILFRPVNTA. The Extracellular portion of the chain corresponds to 101–178; it reads KLPILAEAAE…VRDKPTQVLR (78 aa). The 59-residue stretch at 118-176 folds into the P-type domain; it reads MLDFFFPTACIIRDNQVVVACNNQPYLSESECLKSKCCSSTSGTIIKCYAPVRDKPTQV. A helical membrane pass occupies residues 179 to 199; that stretch reads VFGLAAISILVLGFLPMCCCS. The Cytoplasmic portion of the chain corresponds to 200–238; the sequence is MCWRRKRMNRMLKVLKKQKSKGKKPKGRKASEERALLSH. The segment covering 214–227 has biased composition (basic residues); it reads LKKQKSKGKKPKGR. The interval 214–238 is disordered; sequence LKKQKSKGKKPKGRKASEERALLSH. Over residues 228–238 the composition is skewed to basic and acidic residues; the sequence is KASEERALLSH.

It is found in the membrane. The polypeptide is Fmr1 neighbor protein (Mus musculus (Mouse)).